A 65-amino-acid polypeptide reads, in one-letter code: DNA gyrase inhibitor YacG (65 aa).

Zn(2+)-binding residues include Cys-8, Cys-11, Cys-27, and Cys-31. The disordered stretch occupies residues 43-65 (SYRIPDTGKDSEKQENDPSGSEK). A compositionally biased stretch (basic and acidic residues) spans 48 to 65 (DTGKDSEKQENDPSGSEK).

The protein belongs to the DNA gyrase inhibitor YacG family. Interacts with GyrB. The cofactor is Zn(2+).

Functionally, inhibits all the catalytic activities of DNA gyrase by preventing its interaction with DNA. Acts by binding directly to the C-terminal domain of GyrB, which probably disrupts DNA binding by the gyrase. The chain is DNA gyrase inhibitor YacG from Nitrosospira multiformis (strain ATCC 25196 / NCIMB 11849 / C 71).